Here is a 115-residue protein sequence, read N- to C-terminus: Large ribosomal subunit protein bL20c (115 aa).

Belongs to the bacterial ribosomal protein bL20 family.

Its subcellular location is the plastid. It is found in the chloroplast. Its function is as follows. Binds directly to 23S ribosomal RNA and is necessary for the in vitro assembly process of the 50S ribosomal subunit. It is not involved in the protein synthesizing functions of that subunit. This Cycas taitungensis (Prince sago) protein is Large ribosomal subunit protein bL20c.